The sequence spans 380 residues: MTLDAARLTADLIRCASVTPADDGALDVLERVLSQAGFSCTRVDRGGICNLFARWGDKGHARSFGFNGHTDVVPVGDAAAWTVAPFGAEEKDGFLYGRGATDMKSGVAAFVAAAVDLVTTTPPEGAVIVTITGDEEGDALDGTKALLDYMAASGERMSVCLVGEPTCPDRMGEMIKIGRRGSMTAWFTVTGVQGHSAYPHRAKNPLPAMARLMDRLASHGLDQGTDHFDPSTLAVVTIDTGNTATNVIPAQCRGAVNIRFNDLHSGASLTGWMQGEADRVAEEFGVAVEMKVKISGESFLTPPGELSDLVAAAVEAETGVTPVLSTSGGTSDARFVKDHCPVVEFGLVGRTMHQVDERVEIAQIHQLKAIYGRILRDFFA.

Residue His-69 coordinates Zn(2+). The active site involves Asp-71. Asp-102 is a binding site for Zn(2+). Glu-135 (proton acceptor) is an active-site residue. Residues Glu-136, Glu-164, and His-353 each coordinate Zn(2+).

The protein belongs to the peptidase M20A family. DapE subfamily. In terms of assembly, homodimer. It depends on Zn(2+) as a cofactor. Co(2+) is required as a cofactor.

It carries out the reaction N-succinyl-(2S,6S)-2,6-diaminopimelate + H2O = (2S,6S)-2,6-diaminopimelate + succinate. Its pathway is amino-acid biosynthesis; L-lysine biosynthesis via DAP pathway; LL-2,6-diaminopimelate from (S)-tetrahydrodipicolinate (succinylase route): step 3/3. Its function is as follows. Catalyzes the hydrolysis of N-succinyl-L,L-diaminopimelic acid (SDAP), forming succinate and LL-2,6-diaminopimelate (DAP), an intermediate involved in the bacterial biosynthesis of lysine and meso-diaminopimelic acid, an essential component of bacterial cell walls. In Ruegeria pomeroyi (strain ATCC 700808 / DSM 15171 / DSS-3) (Silicibacter pomeroyi), this protein is Succinyl-diaminopimelate desuccinylase.